We begin with the raw amino-acid sequence, 180 residues long: Cytidylate kinase (180 aa).

7-15 (GLPGSGTTT) serves as a coordination point for ATP.

The protein belongs to the cytidylate kinase family. Type 2 subfamily.

Its subcellular location is the cytoplasm. The enzyme catalyses CMP + ATP = CDP + ADP. It catalyses the reaction dCMP + ATP = dCDP + ADP. This Methanosarcina barkeri (strain Fusaro / DSM 804) protein is Cytidylate kinase.